A 255-amino-acid polypeptide reads, in one-letter code: Imidazole glycerol phosphate synthase subunit HisF (255 aa).

Catalysis depends on residues Asp-11 and Asp-130.

This sequence belongs to the HisA/HisF family. In terms of assembly, heterodimer of HisH and HisF.

The protein resides in the cytoplasm. The catalysed reaction is 5-[(5-phospho-1-deoxy-D-ribulos-1-ylimino)methylamino]-1-(5-phospho-beta-D-ribosyl)imidazole-4-carboxamide + L-glutamine = D-erythro-1-(imidazol-4-yl)glycerol 3-phosphate + 5-amino-1-(5-phospho-beta-D-ribosyl)imidazole-4-carboxamide + L-glutamate + H(+). It functions in the pathway amino-acid biosynthesis; L-histidine biosynthesis; L-histidine from 5-phospho-alpha-D-ribose 1-diphosphate: step 5/9. Its function is as follows. IGPS catalyzes the conversion of PRFAR and glutamine to IGP, AICAR and glutamate. The HisF subunit catalyzes the cyclization activity that produces IGP and AICAR from PRFAR using the ammonia provided by the HisH subunit. In Rhodopseudomonas palustris (strain BisA53), this protein is Imidazole glycerol phosphate synthase subunit HisF.